The sequence spans 822 residues: Molybdenum cofactor sulfurase (822 aa).

Lys245 is modified (N6-(pyridoxal phosphate)lysine). Residue Cys412 is part of the active site. An MOSC domain is found at 658 to 814 (LRLIRQSSND…LKTYSPIKAI (157 aa)).

It belongs to the class-V pyridoxal-phosphate-dependent aminotransferase family. MOCOS subfamily. Requires pyridoxal 5'-phosphate as cofactor.

The enzyme catalyses Mo-molybdopterin + L-cysteine + AH2 = thio-Mo-molybdopterin + L-alanine + A + H2O. It participates in cofactor biosynthesis; molybdopterin biosynthesis. In terms of biological role, sulfurates the molybdenum cofactor. Sulfation of molybdenum is essential for xanthine dehydrogenase (XDH) and aldehyde oxidase (ADO) enzymes in which molybdenum cofactor is liganded by 1 oxygen and 1 sulfur atom in active form. This chain is Molybdenum cofactor sulfurase, found in Bombyx mori (Silk moth).